A 426-amino-acid chain; its full sequence is Histidine--tRNA ligase (426 aa).

This sequence belongs to the class-II aminoacyl-tRNA synthetase family. As to quaternary structure, homodimer.

It localises to the cytoplasm. It catalyses the reaction tRNA(His) + L-histidine + ATP = L-histidyl-tRNA(His) + AMP + diphosphate + H(+). In Malacoplasma penetrans (strain HF-2) (Mycoplasma penetrans), this protein is Histidine--tRNA ligase.